The following is a 298-amino-acid chain: ATP phosphoribosyltransferase (298 aa).

The protein belongs to the ATP phosphoribosyltransferase family. Long subfamily. Requires Mg(2+) as cofactor.

The protein resides in the cytoplasm. It catalyses the reaction 1-(5-phospho-beta-D-ribosyl)-ATP + diphosphate = 5-phospho-alpha-D-ribose 1-diphosphate + ATP. The protein operates within amino-acid biosynthesis; L-histidine biosynthesis; L-histidine from 5-phospho-alpha-D-ribose 1-diphosphate: step 1/9. Its activity is regulated as follows. Feedback inhibited by histidine. Its function is as follows. Catalyzes the condensation of ATP and 5-phosphoribose 1-diphosphate to form N'-(5'-phosphoribosyl)-ATP (PR-ATP). Has a crucial role in the pathway because the rate of histidine biosynthesis seems to be controlled primarily by regulation of HisG enzymatic activity. In Psychromonas ingrahamii (strain DSM 17664 / CCUG 51855 / 37), this protein is ATP phosphoribosyltransferase.